Consider the following 114-residue polypeptide: Ribonuclease P protein component (114 aa).

Belongs to the RnpA family. Consists of a catalytic RNA component (M1 or rnpB) and a protein subunit.

The catalysed reaction is Endonucleolytic cleavage of RNA, removing 5'-extranucleotides from tRNA precursor.. In terms of biological role, RNaseP catalyzes the removal of the 5'-leader sequence from pre-tRNA to produce the mature 5'-terminus. It can also cleave other RNA substrates such as 4.5S RNA. The protein component plays an auxiliary but essential role in vivo by binding to the 5'-leader sequence and broadening the substrate specificity of the ribozyme. The polypeptide is Ribonuclease P protein component (Clostridioides difficile (strain 630) (Peptoclostridium difficile)).